The following is a 172-amino-acid chain: Large ribosomal subunit protein uL10 (172 aa).

It belongs to the universal ribosomal protein uL10 family. As to quaternary structure, part of the ribosomal stalk of the 50S ribosomal subunit. The N-terminus interacts with L11 and the large rRNA to form the base of the stalk. The C-terminus forms an elongated spine to which L12 dimers bind in a sequential fashion forming a multimeric L10(L12)X complex.

Forms part of the ribosomal stalk, playing a central role in the interaction of the ribosome with GTP-bound translation factors. The sequence is that of Large ribosomal subunit protein uL10 from Syntrophotalea carbinolica (strain DSM 2380 / NBRC 103641 / GraBd1) (Pelobacter carbinolicus).